Here is a 225-residue protein sequence, read N- to C-terminus: Transcription factor HES-7 (225 aa).

The region spanning G12 to R69 is the bHLH domain. The 31-residue stretch at Y92–L122 folds into the Orange domain. Positions Y125 to P225 are disordered. Positions L147 to L158 are enriched in low complexity. Positions A212–P225 are enriched in pro residues. Residues W221–W224 carry the WRPW motif motif.

Transcription repression requires formation of a complex with a corepressor protein of the Groucho/TLE family.

The protein localises to the nucleus. Transcriptional repressor. Represses transcription from both N box- and E box-containing promoters. May with HES1, cooperatively regulate somite formation in the presomitic mesoderm (PSM). May function as a segmentation clock, which is essential for coordinated somite segmentation. This Homo sapiens (Human) protein is Transcription factor HES-7 (HES7).